A 321-amino-acid chain; its full sequence is Methionine import ATP-binding protein MetN (321 aa).

The region spanning 2–241 (INAVDLHKVY…PGSLLARSLF (240 aa)) is the ABC transporter domain. Residue 38-45 (GPSGAGKS) participates in ATP binding.

It belongs to the ABC transporter superfamily. Methionine importer (TC 3.A.1.24) family. The complex is composed of two ATP-binding proteins (MetN), two transmembrane proteins (MetI) and a solute-binding protein (MetQ).

The protein localises to the cell membrane. It carries out the reaction L-methionine(out) + ATP + H2O = L-methionine(in) + ADP + phosphate + H(+). It catalyses the reaction D-methionine(out) + ATP + H2O = D-methionine(in) + ADP + phosphate + H(+). Part of the ABC transporter complex MetNIQ involved in methionine import. Responsible for energy coupling to the transport system. This chain is Methionine import ATP-binding protein MetN, found in Thermobifida fusca (strain YX).